The primary structure comprises 349 residues: KH domain-containing, RNA-binding, signal transduction-associated protein 2 (349 aa).

One can recognise a KH domain in the interval 65–135 (LIPVKQYPKF…HLSDELHVLI (71 aa)). 2 disordered regions span residues 181–263 (SEES…PPPA) and 320–349 (EEWT…YGRY). A compositionally biased stretch (low complexity) spans 218–231 (RGVLTPRGTTVTRG). Omega-N-methylarginine occurs at positions 230 and 240. Basic and acidic residues predominate over residues 340-349 (GYREHPYGRY).

Belongs to the KHDRBS family. In terms of assembly, self-associates to form homooligomers. Interacts with SAFB, SFRS9 and YTHDC1. Found in a complex with KHDRBS1, KHDRBS2 and KHDRBS3. Interacts with RBMX. Interacts with the SH3 domains of FYN and PLCG1. Interacts with the SH2 domains of FYN, GRAP2, PLCG1 and RASA1. Interacts with RBMX. In terms of processing, methylated. Post-translationally, phosphorylated on tyrosine residues by FYN. Tyrosine phosphorylated by PTK6 and SRC. Tyrosine phosphorylated by SRC during mitosis. As to expression, expressed in the cortex, cerebellum, striatum, midbrain, brainstem and thalamus of the brain (at protein level). Expressed in neurons (at protein level). Expressed in brain and testis. Expressed in the dentate gyrus of the hippocampus.

The protein localises to the nucleus. RNA-binding protein that plays a role in the regulation of alternative splicing and influences mRNA splice site selection and exon inclusion. Its phosphorylation by FYN inhibits its ability to regulate splice site selection. Induces an increased concentration-dependent incorporation of exon in CD44 pre-mRNA by direct binding to purine-rich exonic enhancer. May function as an adapter protein for Src kinases during mitosis. Binds both poly(A) and poly(U) homopolymers. Phosphorylation by PTK6 inhibits its RNA-binding ability. The polypeptide is KH domain-containing, RNA-binding, signal transduction-associated protein 2 (Khdrbs2) (Rattus norvegicus (Rat)).